Here is an 828-residue protein sequence, read N- to C-terminus: Molybdenum cofactor sulfurase (828 aa).

Position 239 is an N6-(pyridoxal phosphate)lysine (Lys239). Cys402 is an active-site residue. The segment at 638 to 682 (TRYTRRSLHSRSSTAALRRQRPVEESSMPGSFPSDTPLSRTPEPP) is disordered. The MOSC domain occupies 652 to 825 (AALRRQRPVE…VMVGDVVRPW (174 aa)).

The protein belongs to the class-V pyridoxal-phosphate-dependent aminotransferase family. MOCOS subfamily. Pyridoxal 5'-phosphate is required as a cofactor.

The catalysed reaction is Mo-molybdopterin + L-cysteine + AH2 = thio-Mo-molybdopterin + L-alanine + A + H2O. Sulfurates the molybdenum cofactor. Sulfation of molybdenum is essential for xanthine dehydrogenase (XDH) and aldehyde oxidase (ADO) enzymes in which molybdenum cofactor is liganded by 1 oxygen and 1 sulfur atom in active form. This chain is Molybdenum cofactor sulfurase, found in Aspergillus terreus (strain NIH 2624 / FGSC A1156).